A 199-amino-acid polypeptide reads, in one-letter code: Putative rhomboid protease YdcA (199 aa).

The next 6 membrane-spanning stretches (helical) occupy residues 14–34, 65–85, 97–117, 122–142, 147–167, and 172–192; these read LYPV…FFSL, ILLH…FLFA, FLLV…VTEP, HVGA…MVLF, IGQE…LMSF, and INMM…FLCV. Ser126 serves as the catalytic Nucleophile. His177 acts as the Charge relay system in catalysis.

The protein belongs to the peptidase S54 family.

The protein resides in the cell membrane. This is Putative rhomboid protease YdcA (ydcA) from Bacillus subtilis (strain 168).